We begin with the raw amino-acid sequence, 144 residues long: 3-dehydroquinate dehydratase (144 aa).

The active-site Proton acceptor is tyrosine 24. Residues asparagine 76, histidine 82, and aspartate 89 each coordinate substrate. Residue histidine 102 is the Proton donor of the active site. Substrate is bound by residues 103–104 (LS) and arginine 113.

This sequence belongs to the type-II 3-dehydroquinase family. As to quaternary structure, homododecamer.

The enzyme catalyses 3-dehydroquinate = 3-dehydroshikimate + H2O. It participates in metabolic intermediate biosynthesis; chorismate biosynthesis; chorismate from D-erythrose 4-phosphate and phosphoenolpyruvate: step 3/7. In terms of biological role, catalyzes a trans-dehydration via an enolate intermediate. The protein is 3-dehydroquinate dehydratase of Nitrosomonas europaea (strain ATCC 19718 / CIP 103999 / KCTC 2705 / NBRC 14298).